We begin with the raw amino-acid sequence, 186 residues long: Ribosome rescue factor SmrB (186 aa).

In terms of domain architecture, Smr spans Ile-99 to Glu-174.

The protein belongs to the SmrB family. As to quaternary structure, associates with collided ribosomes, but not with correctly translating polysomes.

Functionally, acts as a ribosome collision sensor. Detects stalled/collided disomes (pairs of ribosomes where the leading ribosome is stalled and a second ribosome has collided with it) and endonucleolytically cleaves mRNA at the 5' boundary of the stalled ribosome. Stalled/collided disomes form a new interface (primarily via the 30S subunits) that binds SmrB. Cleaved mRNA becomes available for tmRNA ligation, leading to ribosomal subunit dissociation and rescue of stalled ribosomes. In Buchnera aphidicola subsp. Acyrthosiphon pisum (strain 5A), this protein is Ribosome rescue factor SmrB.